The chain runs to 80 residues: Serine palmitoyltransferase-regulating protein TSC3 (80 aa).

A helical transmembrane segment spans residues 54-74; the sequence is FDSFFLHVFFLTIFSLSFFGI.

As to quaternary structure, interacts with the serine palmitoyltransferase complex LCB1-LCB2. Component of the SPOTS complex, at least composed of LCB1/2 (LCB1 and/or LCB2), ORM1/2 (ORM1 and/or ORM2), SAC1 and TSC3.

The protein resides in the endoplasmic reticulum membrane. Stimulates the activity of serine palmitoyltransferase (SPT), and thus plays a role in the biosynthesis of sphingolipids. The sequence is that of Serine palmitoyltransferase-regulating protein TSC3 (TSC3) from Saccharomyces cerevisiae (strain ATCC 204508 / S288c) (Baker's yeast).